A 251-amino-acid polypeptide reads, in one-letter code: MAVHLLIVDALNLIRRIHAVQGSPCVETCQHALDQLIMHSQPTHAVAVFDDENRSSGWRHQRLPDYKADRPPMPEELHDEMPALRAAFEQRGVPCWSASGNEADDLAATLAVKVTQAGHQATIVSTDKGYCQLLSPTLRIRDYFQKRWLDAPFIDKEFGVQPQQLPDYWGLAGISSSKVPGVAGIGPKSATQLLVEFQSLEGIYENLDAVAEKWRKKLETHKEMAFLCRDIARLQTDLHIDGNLQQLRLVR.

Aspartate 104 lines the Mg(2+) pocket. A 5'-3' exonuclease domain is found at 160–249 (VQPQQLPDYW…IDGNLQQLRL (90 aa)). Residues leucine 171, alanine 172, proline 180, valine 182, and isoleucine 185 each contribute to the K(+) site. The interval 184–189 (GIGPKS) is interaction with DNA.

It belongs to the Xni family. Mg(2+) is required as a cofactor. It depends on K(+) as a cofactor.

In terms of biological role, has flap endonuclease activity. During DNA replication, flap endonucleases cleave the 5'-overhanging flap structure that is generated by displacement synthesis when DNA polymerase encounters the 5'-end of a downstream Okazaki fragment. This is Flap endonuclease Xni from Shigella flexneri serotype 5b (strain 8401).